The sequence spans 371 residues: Putative glutamate--cysteine ligase 2 (371 aa).

Belongs to the glutamate--cysteine ligase type 2 family. YbdK subfamily.

The catalysed reaction is L-cysteine + L-glutamate + ATP = gamma-L-glutamyl-L-cysteine + ADP + phosphate + H(+). Its function is as follows. ATP-dependent carboxylate-amine ligase which exhibits weak glutamate--cysteine ligase activity. The polypeptide is Putative glutamate--cysteine ligase 2 (Paraburkholderia phytofirmans (strain DSM 17436 / LMG 22146 / PsJN) (Burkholderia phytofirmans)).